Consider the following 344-residue polypeptide: UDP-3-O-acylglucosamine N-acyltransferase (344 aa).

Histidine 244 acts as the Proton acceptor in catalysis.

This sequence belongs to the transferase hexapeptide repeat family. LpxD subfamily. As to quaternary structure, homotrimer.

It catalyses the reaction a UDP-3-O-[(3R)-3-hydroxyacyl]-alpha-D-glucosamine + a (3R)-hydroxyacyl-[ACP] = a UDP-2-N,3-O-bis[(3R)-3-hydroxyacyl]-alpha-D-glucosamine + holo-[ACP] + H(+). It participates in bacterial outer membrane biogenesis; LPS lipid A biosynthesis. In terms of biological role, catalyzes the N-acylation of UDP-3-O-acylglucosamine using 3-hydroxyacyl-ACP as the acyl donor. Is involved in the biosynthesis of lipid A, a phosphorylated glycolipid that anchors the lipopolysaccharide to the outer membrane of the cell. The protein is UDP-3-O-acylglucosamine N-acyltransferase of Pseudoalteromonas atlantica (strain T6c / ATCC BAA-1087).